Consider the following 374-residue polypeptide: Peptide chain release factor 2 (374 aa).

Glutamine 248 is subject to N5-methylglutamine.

The protein belongs to the prokaryotic/mitochondrial release factor family. Methylated by PrmC. Methylation increases the termination efficiency of RF2.

It localises to the cytoplasm. Its function is as follows. Peptide chain release factor 2 directs the termination of translation in response to the peptide chain termination codons UGA and UAA. This Thermomicrobium roseum (strain ATCC 27502 / DSM 5159 / P-2) protein is Peptide chain release factor 2.